A 439-amino-acid polypeptide reads, in one-letter code: Xylose isomerase (439 aa).

Active-site residues include H98 and D101. The Mg(2+) site is built by E229, E265, H268, D293, D304, D306, and D335.

It belongs to the xylose isomerase family. Homotetramer. It depends on Mg(2+) as a cofactor.

The protein resides in the cytoplasm. The catalysed reaction is alpha-D-xylose = alpha-D-xylulofuranose. In terms of biological role, involved in D-xylose catabolism. This is Xylose isomerase (xylA) from Staphylococcus xylosus.